The sequence spans 452 residues: tRNA(Ile)-lysidine synthase (452 aa).

27-32 (SGGIDS) lines the ATP pocket.

It belongs to the tRNA(Ile)-lysidine synthase family.

The protein resides in the cytoplasm. It catalyses the reaction cytidine(34) in tRNA(Ile2) + L-lysine + ATP = lysidine(34) in tRNA(Ile2) + AMP + diphosphate + H(+). Ligates lysine onto the cytidine present at position 34 of the AUA codon-specific tRNA(Ile) that contains the anticodon CAU, in an ATP-dependent manner. Cytidine is converted to lysidine, thus changing the amino acid specificity of the tRNA from methionine to isoleucine. The chain is tRNA(Ile)-lysidine synthase from Persephonella marina (strain DSM 14350 / EX-H1).